Here is a 120-residue protein sequence, read N- to C-terminus: Large ribosomal subunit protein uL18 (120 aa).

This sequence belongs to the universal ribosomal protein uL18 family. Part of the 50S ribosomal subunit; part of the 5S rRNA/L5/L18/L25 subcomplex. Contacts the 5S and 23S rRNAs.

Functionally, this is one of the proteins that bind and probably mediate the attachment of the 5S RNA into the large ribosomal subunit, where it forms part of the central protuberance. The polypeptide is Large ribosomal subunit protein uL18 (Maricaulis maris (strain MCS10) (Caulobacter maris)).